Consider the following 264-residue polypeptide: MKQYLDLLRRILDEGVRKEDRTGTGTISVFGHQMCFDLEEGFPLLTTKRLHLKSIIYELLWFLRGDTNVHYLQEHGVRIWNEWADENGDLGPIYGYQWRSWPDYRGGHIDQMQEVLRQLREEPDSRRIIVCSWNVGQLADMHLPPCHCFMQFYVADGRLSLQLYQRSADSFLGIPFNIASYALLLQMIAHVTGLKPGRFVHTLGDAHIYLNHLEQVQLQLSREPRALPRMVLNPEVSDLFDFRYEDFRLEGYDPHPHIAGVVAV.

R21 serves as a coordination point for dUMP. A (6R)-5,10-methylene-5,6,7,8-tetrahydrofolate-binding site is contributed by H51. 126–127 (RR) is a binding site for dUMP. C146 acts as the Nucleophile in catalysis. Residues 166-169 (RSAD), N177, and 207-209 (HIY) contribute to the dUMP site. D169 serves as a coordination point for (6R)-5,10-methylene-5,6,7,8-tetrahydrofolate. A263 lines the (6R)-5,10-methylene-5,6,7,8-tetrahydrofolate pocket.

It belongs to the thymidylate synthase family. Bacterial-type ThyA subfamily. As to quaternary structure, homodimer.

It localises to the cytoplasm. It catalyses the reaction dUMP + (6R)-5,10-methylene-5,6,7,8-tetrahydrofolate = 7,8-dihydrofolate + dTMP. The protein operates within pyrimidine metabolism; dTTP biosynthesis. Functionally, catalyzes the reductive methylation of 2'-deoxyuridine-5'-monophosphate (dUMP) to 2'-deoxythymidine-5'-monophosphate (dTMP) while utilizing 5,10-methylenetetrahydrofolate (mTHF) as the methyl donor and reductant in the reaction, yielding dihydrofolate (DHF) as a by-product. This enzymatic reaction provides an intracellular de novo source of dTMP, an essential precursor for DNA biosynthesis. This is Thymidylate synthase from Porphyromonas gingivalis (strain ATCC BAA-308 / W83).